The sequence spans 279 residues: Formamidopyrimidine-DNA glycosylase (279 aa).

Residue proline 2 is the Schiff-base intermediate with DNA of the active site. Residue glutamate 3 is the Proton donor of the active site. Lysine 58 acts as the Proton donor; for beta-elimination activity in catalysis. DNA-binding residues include histidine 92, arginine 111, and arginine 153. The FPG-type zinc finger occupies 238 to 272 (TVYGKEGQSCLSCSSTIIKTKHSGRSTFYCKTCQY). The Proton donor; for delta-elimination activity role is filled by arginine 262.

The protein belongs to the FPG family. As to quaternary structure, monomer. Zn(2+) is required as a cofactor.

It catalyses the reaction Hydrolysis of DNA containing ring-opened 7-methylguanine residues, releasing 2,6-diamino-4-hydroxy-5-(N-methyl)formamidopyrimidine.. The catalysed reaction is 2'-deoxyribonucleotide-(2'-deoxyribose 5'-phosphate)-2'-deoxyribonucleotide-DNA = a 3'-end 2'-deoxyribonucleotide-(2,3-dehydro-2,3-deoxyribose 5'-phosphate)-DNA + a 5'-end 5'-phospho-2'-deoxyribonucleoside-DNA + H(+). In terms of biological role, involved in base excision repair of DNA damaged by oxidation or by mutagenic agents. Acts as a DNA glycosylase that recognizes and removes damaged bases. Has a preference for oxidized purines, such as 7,8-dihydro-8-oxoguanine (8-oxoG). Has AP (apurinic/apyrimidinic) lyase activity and introduces nicks in the DNA strand. Cleaves the DNA backbone by beta-delta elimination to generate a single-strand break at the site of the removed base with both 3'- and 5'-phosphates. This chain is Formamidopyrimidine-DNA glycosylase, found in Rickettsia massiliae (strain Mtu5).